The chain runs to 339 residues: DNA-directed RNA polymerase subunit alpha (339 aa).

The interval 1–235 is alpha N-terminal domain (alpha-NTD); sequence MVLQKNWQSL…DQLQLFINFD (235 aa). The interval 251–339 is alpha C-terminal domain (alpha-CTD); sequence FNRNLLRKVD…DLAKRLDETF (89 aa).

Belongs to the RNA polymerase alpha chain family. Homodimer. The RNAP catalytic core consists of 2 alpha, 1 beta, 1 beta' and 1 omega subunit. When a sigma factor is associated with the core the holoenzyme is formed, which can initiate transcription.

The enzyme catalyses RNA(n) + a ribonucleoside 5'-triphosphate = RNA(n+1) + diphosphate. DNA-dependent RNA polymerase catalyzes the transcription of DNA into RNA using the four ribonucleoside triphosphates as substrates. This is DNA-directed RNA polymerase subunit alpha from Gluconobacter oxydans (strain 621H) (Gluconobacter suboxydans).